The primary structure comprises 118 residues: Small ribosomal subunit protein uS13 (118 aa).

The interval 92-118 is disordered; it reads RRSLPVRGQRTKTNARTRKGPRKPIKK.

Belongs to the universal ribosomal protein uS13 family. As to quaternary structure, part of the 30S ribosomal subunit. Forms a loose heterodimer with protein S19. Forms two bridges to the 50S subunit in the 70S ribosome.

Located at the top of the head of the 30S subunit, it contacts several helices of the 16S rRNA. In the 70S ribosome it contacts the 23S rRNA (bridge B1a) and protein L5 of the 50S subunit (bridge B1b), connecting the 2 subunits; these bridges are implicated in subunit movement. Contacts the tRNAs in the A and P-sites. This chain is Small ribosomal subunit protein uS13, found in Acinetobacter baylyi (strain ATCC 33305 / BD413 / ADP1).